Reading from the N-terminus, the 207-residue chain is Ras-related protein Rab-7a (207 aa).

Position 2 is an N-acetylthreonine (Thr2). GTP contacts are provided by Ser17, Gly18, Val19, Gly20, Lys21, Thr22, Ser23, Ser34, Asn35, Tyr37, and Thr40. Thr22 lines the Mg(2+) pocket. The Switch 1 signature appears at Tyr28–Ile41. Residues Thr40 and Asp63 each coordinate Mg(2+). A GTP-binding site is contributed by Gly66. The Switch 2 motif lies at Gln67–Asp82. Ser72 bears the Phosphoserine mark. GTP is bound by residues Asn125, Lys126, Asp128, Ala156, and Lys157. Residues Lys191 and Lys194 each participate in a glycyl lysine isopeptide (Lys-Gly) (interchain with G-Cter in ubiquitin) cross-link. S-geranylgeranyl cysteine attachment occurs at residues Cys205 and Cys207. Cys207 is modified (cysteine methyl ester).

Belongs to the small GTPase superfamily. Rab family. In terms of assembly, interacts with NTRK1/TRKA. Interacts with RILP. Interacts with PSMA7. Interacts with RNF115. Interacts with FYCO1. Interacts with the PIK3C3/VPS34-PIK3R4 complex. The GTP-bound form interacts with OSBPL1A. The GTP-bound form interacts with RAC1. Interacts with CLN3. Interacts with CHM, the substrate-binding subunit of the Rab geranylgeranyltransferase complex. Interacts with C9orf72. Does not interact with HPS4 and the BLOC-3 complex (heterodimer of HPS1 and HPS4). Interacts with CLN5. Interacts with PLEKHM1 (via N- and C-terminus). Interacts with PRPH; the interaction is direct. Interacts with VPS13A. The GDP-bound form interacts with RIMOC1. Interacts with the MON1A-CCZ1B complex and this interaction is enhanced in the presence of RIMOC1. Interacts with VPS39 and VPS41. Forms a ternary complex with LAMP2 and RUFY4; the interaction with LAMP2 is mediated by RUFY4 (via RUN and coiled coil domains). It depends on Mg(2+) as a cofactor. Deubiquitination at Lys-191 and Lys-194 by USP32. In terms of processing, phosphorylated at Ser-72 by LRRK1; phosphorylation is dependent on protein kinase C (PKC) activation of LRRK1. Post-translationally, prenylated. Prenylation is required for association with cellular membranes.

The protein localises to the cytoplasmic vesicle. Its subcellular location is the phagosome membrane. It localises to the late endosome membrane. It is found in the lysosome membrane. The protein resides in the melanosome membrane. The protein localises to the autophagosome membrane. Its subcellular location is the lipid droplet. It localises to the endosome membrane. It is found in the mitochondrion membrane. The catalysed reaction is GTP + H2O = GDP + phosphate + H(+). Regulated by guanine nucleotide exchange factors (GEFs) which promote the exchange of bound GDP for free GTP. Regulated by GTPase activating proteins (GAPs) which increase the GTP hydrolysis activity. Inhibited by GDP dissociation inhibitors (GDIs). The small GTPases Rab are key regulators of intracellular membrane trafficking, from the formation of transport vesicles to their fusion with membranes. Rabs cycle between an inactive GDP-bound form and an active GTP-bound form that is able to recruit to membranes different sets of downstream effectors directly responsible for vesicle formation, movement, tethering and fusion. In its active state, RAB7A binds to a variety of effector proteins playing a key role in the regulation of endo-lysosomal trafficking. Governs early-to-late endosomal maturation, microtubule minus-end as well as plus-end directed endosomal migration and positioning, and endosome-lysosome transport through different protein-protein interaction cascades. Also plays a central role in growth-factor-mediated cell signaling, nutrient-transporter-mediated nutrient uptake, neurotrophin transport in the axons of neurons and lipid metabolism. Also involved in regulation of some specialized endosomal membrane trafficking, such as maturation of melanosomes, pathogen-induced phagosomes (or vacuoles) and autophagosomes. Plays a role in the maturation and acidification of phagosomes that engulf pathogens, such as S.aureus and Mycobacteria. Plays a role in the fusion of phagosomes with lysosomes. In concert with RAC1, plays a role in regulating the formation of RBs (ruffled borders) in osteoclasts. Controls the endosomal trafficking and neurite outgrowth signaling of NTRK1/TRKA. Regulates the endocytic trafficking of the EGF-EGFR complex by regulating its lysosomal degradation. Involved in the ADRB2-stimulated lipolysis through lipophagy, a cytosolic lipase-independent autophagic pathway. Required for the exosomal release of SDCBP, CD63 and syndecan. Required for vesicular trafficking and cell surface expression of ACE2. May play a role in PRPH neuronal intermediate filament assembly. The sequence is that of Ras-related protein Rab-7a (RAB7A) from Bos taurus (Bovine).